The following is a 245-amino-acid chain: 1-(5-phosphoribosyl)-5-[(5-phosphoribosylamino)methylideneamino] imidazole-4-carboxamide isomerase (245 aa).

D7 serves as the catalytic Proton acceptor. D129 acts as the Proton donor in catalysis.

This sequence belongs to the HisA/HisF family.

It is found in the cytoplasm. It carries out the reaction 1-(5-phospho-beta-D-ribosyl)-5-[(5-phospho-beta-D-ribosylamino)methylideneamino]imidazole-4-carboxamide = 5-[(5-phospho-1-deoxy-D-ribulos-1-ylimino)methylamino]-1-(5-phospho-beta-D-ribosyl)imidazole-4-carboxamide. Its pathway is amino-acid biosynthesis; L-histidine biosynthesis; L-histidine from 5-phospho-alpha-D-ribose 1-diphosphate: step 4/9. This chain is 1-(5-phosphoribosyl)-5-[(5-phosphoribosylamino)methylideneamino] imidazole-4-carboxamide isomerase, found in Yersinia pestis bv. Antiqua (strain Antiqua).